A 280-amino-acid polypeptide reads, in one-letter code: UPF0328 protein ECU06_0020/ECU06_1700 (280 aa).

It belongs to the UPF0328 family.

This chain is UPF0328 protein ECU06_0020/ECU06_1700, found in Encephalitozoon cuniculi (strain GB-M1) (Microsporidian parasite).